The sequence spans 804 residues: Leucine--tRNA ligase (804 aa).

The 'HIGH' region signature appears at 40-51; the sequence is PYPSGAGLHVGH. A 'KMSKS' region motif is present at residues 576 to 580; the sequence is KMSKS. Lys-579 is a binding site for ATP.

This sequence belongs to the class-I aminoacyl-tRNA synthetase family.

The protein resides in the cytoplasm. It catalyses the reaction tRNA(Leu) + L-leucine + ATP = L-leucyl-tRNA(Leu) + AMP + diphosphate. This is Leucine--tRNA ligase from Staphylococcus aureus (strain MRSA252).